The primary structure comprises 636 residues: ATP-dependent zinc metalloprotease FtsH 1 (636 aa).

Over 1 to 18 (MKLSPPKKNLPPQKNNEP) the chain is Cytoplasmic. Residues 19 to 39 (PFPYLRLLVQVGIALFLVWIW) traverse the membrane as a helical segment. The Periplasmic segment spans residues 40–126 (QESLHKATVS…YGSVKPSLLS (87 aa)). A helical transmembrane segment spans residues 127–147 (QILFSWVVPILIFFLVWFALA). At 148 to 636 (RFMGGGGAGY…KEAPSYSSTL (489 aa)) the chain is on the cytoplasmic side. 220 to 227 (GPPGTGKT) is a binding site for ATP. H442 contributes to the Zn(2+) binding site. Residue E443 is part of the active site. H446 and D519 together coordinate Zn(2+).

The protein in the central section; belongs to the AAA ATPase family. It in the C-terminal section; belongs to the peptidase M41 family. Homohexamer. Zn(2+) serves as cofactor.

The protein localises to the cell inner membrane. Functionally, acts as a processive, ATP-dependent zinc metallopeptidase for both cytoplasmic and membrane proteins. Plays a role in the quality control of integral membrane proteins. The polypeptide is ATP-dependent zinc metalloprotease FtsH 1 (Methylacidiphilum infernorum (isolate V4) (Methylokorus infernorum (strain V4))).